The sequence spans 445 residues: C-type lectin domain family 4 member M (445 aa).

Over 1–49 (MSDSKEPRVQQLGLLEEDPTTSGIRLFPRDFQFQQIHGHKSSTGCLGHG) the chain is Cytoplasmic. An Endocytosis signal motif is present at residues 14-15 (LL). The helical; Signal-anchor for type II membrane protein transmembrane segment at 50–70 (PLVLQLLSFTLLAGVLVAILV) threads the bilayer. The Extracellular portion of the chain corresponds to 71–445 (QVSKVPSSLS…KKPAVCFRDE (375 aa)). N-linked (GlcNAc...) asparagine glycosylation is present at asparagine 92. 9 consecutive repeat copies span residues 108–130 (KLQE…PEKS), 131–151 (KLQE…ELPE), 154–176 (KLQE…PEKS), 177–199 (KLQE…PEKS), 200–222 (KLQE…PEKS), 223–245 (KLQE…PEKS), 246–268 (KLQE…PEKS), 269–291 (ELQE…PDQS), and 292–314 (KQQQ…CRHC). Positions 108-315 (KLQEIYQELT…AFERLCRHCP (208 aa)) are 9 X approximate tandem repeats. Cystine bridges form between cysteine 311–cysteine 441, cysteine 314–cysteine 325, cysteine 342–cysteine 435, and cysteine 414–cysteine 427. The region spanning 320 to 436 (FFQGNCYFMS…CDIDNYWICK (117 aa)) is the C-type lectin domain. Ca(2+) contacts are provided by glutamate 405, asparagine 407, serine 409, glutamate 412, asparagine 423, and aspartate 424. Residue asparagine 407 is glycosylated (N-linked (GlcNAc...) asparagine).

In terms of assembly, homotetramer.

Its subcellular location is the membrane. In terms of biological role, probable pathogen-recognition receptor involved in peripheral immune surveillance in liver. May mediate the endocytosis of pathogens which are subsequently degraded in lysosomal compartments. Probably recognizes in a calcium-dependent manner high mannose N-linked oligosaccharides in a variety of pathogen antigens. Is a receptor for ICAM3, probably by binding to mannose-like carbohydrates. The protein is C-type lectin domain family 4 member M (CLEC4M) of Pan troglodytes (Chimpanzee).